The chain runs to 606 residues: Medium-chain acyl-CoA ligase ACSF2, mitochondrial (606 aa).

A mitochondrion-targeting transit peptide spans 1-13; sequence MSSKILLTNLRTS. ATP is bound by residues 256–264, aspartate 484, arginine 499, and lysine 590; that span reads TSGTTGKPK.

The protein belongs to the ATP-dependent AMP-binding enzyme family.

The protein resides in the mitochondrion. The enzyme catalyses a medium-chain fatty acid + ATP + CoA = a medium-chain fatty acyl-CoA + AMP + diphosphate. It carries out the reaction octanoate + ATP + CoA = octanoyl-CoA + AMP + diphosphate. In terms of biological role, acyl-CoA synthases catalyze the initial reaction in fatty acid metabolism, by forming a thioester with CoA. Has some preference toward medium-chain substrates. Plays a role in adipocyte differentiation. This Danio rerio (Zebrafish) protein is Medium-chain acyl-CoA ligase ACSF2, mitochondrial.